Reading from the N-terminus, the 387-residue chain is Phosphoglycerate kinase (387 aa).

Substrate is bound by residues 21–23, arginine 36, 59–62, arginine 113, and arginine 146; these read DLN and HLGR. ATP is bound by residues lysine 197, glutamate 314, and 340 to 343; that span reads GGDT.

Belongs to the phosphoglycerate kinase family. In terms of assembly, monomer.

The protein localises to the cytoplasm. It catalyses the reaction (2R)-3-phosphoglycerate + ATP = (2R)-3-phospho-glyceroyl phosphate + ADP. The protein operates within carbohydrate degradation; glycolysis; pyruvate from D-glyceraldehyde 3-phosphate: step 2/5. The protein is Phosphoglycerate kinase of Cronobacter sakazakii (strain ATCC BAA-894) (Enterobacter sakazakii).